The following is a 658-amino-acid chain: Vertnin (658 aa).

It belongs to the vertnin family.

It localises to the nucleus. Acts as a transcription factor that regulates development of thoracic vertebrae. This is Vertnin (VRTN) from Bos taurus (Bovine).